A 595-amino-acid polypeptide reads, in one-letter code: Elongation factor 4 (595 aa).

A tr-type G domain is found at 2-184 (KNIRNFSIIA…QIVERIPTPK (183 aa)). Residues 14-19 (DHGKST) and 131-134 (NKID) each bind GTP.

The protein belongs to the TRAFAC class translation factor GTPase superfamily. Classic translation factor GTPase family. LepA subfamily.

The protein resides in the cell inner membrane. It carries out the reaction GTP + H2O = GDP + phosphate + H(+). Functionally, required for accurate and efficient protein synthesis under certain stress conditions. May act as a fidelity factor of the translation reaction, by catalyzing a one-codon backward translocation of tRNAs on improperly translocated ribosomes. Back-translocation proceeds from a post-translocation (POST) complex to a pre-translocation (PRE) complex, thus giving elongation factor G a second chance to translocate the tRNAs correctly. Binds to ribosomes in a GTP-dependent manner. This Vesicomyosocius okutanii subsp. Calyptogena okutanii (strain HA) protein is Elongation factor 4.